A 108-amino-acid chain; its full sequence is MLKTTLLFFVTALCEIIGCFLTWLWIKRGASVWWLLPAAASLALFVWLLTLHPAASGRVYAAYGGVYVCTALLWLRVVDGVRLTVYDWCGAPIALCGMLIIVVGWGRT.

Residues 1-5 are Periplasmic-facing; that stretch reads MLKTT. The chain crosses the membrane as a helical span at residues 6-26; sequence LLFFVTALCEIIGCFLTWLWI. Residues 27-30 lie on the Cytoplasmic side of the membrane; sequence KRGA. Residues 31-51 form a helical membrane-spanning segment; sequence SVWWLLPAAASLALFVWLLTL. Residues 52–60 lie on the Periplasmic side of the membrane; that stretch reads HPAASGRVY. The helical transmembrane segment at 61–81 threads the bilayer; it reads AAYGGVYVCTALLWLRVVDGV. The Cytoplasmic segment spans residues 82 to 84; it reads RLT. A helical transmembrane segment spans residues 85 to 105; the sequence is VYDWCGAPIALCGMLIIVVGW. At 106–108 the chain is on the periplasmic side; sequence GRT.

The protein belongs to the UPF0060 family.

The protein resides in the cell inner membrane. This is UPF0060 membrane protein YnfA from Salmonella dublin (strain CT_02021853).